Reading from the N-terminus, the 280-residue chain is F-actin-capping protein subunit alpha (280 aa).

The protein belongs to the F-actin-capping protein alpha subunit family. Heterodimer of an alpha and a beta subunit.

Its subcellular location is the cytoplasm. The protein localises to the cytoskeleton. In terms of biological role, F-actin-capping proteins bind in a Ca(2+)-independent manner to the fast growing ends of actin filaments (barbed end) thereby blocking the exchange of subunits at these ends. Unlike other capping proteins (such as gelsolin and severin), these proteins do not sever actin filaments. This is F-actin-capping protein subunit alpha (CAP01) from Candida albicans (strain SC5314 / ATCC MYA-2876) (Yeast).